A 644-amino-acid polypeptide reads, in one-letter code: Adhesion G-protein coupled receptor F2 (644 aa).

The signal sequence occupies residues 1–18 (MIPAHWLYCLMLLLPIES). At 19-386 (CRILCQASSK…ESPVLTYITY (368 aa)) the chain is on the extracellular side. Residues Asn155, Asn219, Asn293, and Asn311 are each glycosylated (N-linked (GlcNAc...) asparagine). One can recognise a GAIN-B domain in the interval 233 to 377 (SRGSLGKNFT…SILMSPNTLE (145 aa)). 2 disulfide bridges follow: Cys329-Cys356 and Cys344-Cys358. A GPS region spans residues 329-377 (CVGWHSLESRWDWRACKTIQENSRQAVCRCRPNKLYTSFSILMSPNTLE). The helical transmembrane segment at 387 to 407 (IGLGISICSLIICLAIEVLVW) threads the bilayer. At 408 to 422 (SQVTKTEISYLRHLC) the chain is on the cytoplasmic side. Residues 423–443 (IANIAATLLMADAWFIVASFL) traverse the membrane as a helical segment. At 444-465 (SGPVLHHNGCVAATFFVHFFYL) the chain is on the extracellular side. The chain crosses the membrane as a helical span at residues 466–486 (SVFFWMLAKALLILYGILIVF). At 487-493 (HTLPKSC) the chain is on the cytoplasmic side. A helical transmembrane segment spans residues 494–514 (LVASLFSVGYGCPLVIAIITL). Residues 515 to 541 (AVTEPGKGYLRPEACWLNWDMTKALLA) lie on the Extracellular side of the membrane. The helical transmembrane segment at 542–562 (FVVPALAIVVVNLITVTMVII) threads the bilayer. Residues 563 to 585 (KTQRAAIGSSMFQEVRAIVRICK) are Cytoplasmic-facing. The helical transmembrane segment at 586–606 (NIAILTPLLGLTWGFGIATVI) threads the bilayer. Residues 607 to 610 (NGHS) lie on the Extracellular side of the membrane. A helical membrane pass occupies residues 611–631 (LAFHIIFSLLNALQVSPDAAV).

This sequence belongs to the G-protein coupled receptor 2 family. Adhesion G-protein coupled receptor (ADGR) subfamily. Mainly expressed in skin and heart, and very weakly in lung and spleen. Detected in all epidermal layers of skin.

The protein resides in the membrane. Orphan receptor. This Mus musculus (Mouse) protein is Adhesion G-protein coupled receptor F2 (Adgrf2).